Consider the following 1447-residue polypeptide: Sister chromatid cohesion protein PDS5 homolog B (1447 aa).

Residues 383 to 419 form an HEAT repeat; that stretch reads LLVNDHLLNFVRERTLDKRWRVRKEAMMGLAQIYKKY. The disordered stretch occupies residues 1117–1447; the sequence is KSFFTPGKPK…RRRSAKRERR (331 aa). At Lys-1136 the chain carries N6-acetyllysine. Residues 1137–1155 are compositionally biased toward polar residues; that stretch reads PLSSAGKQSQTKSSRMETV. 6 positions are modified to phosphoserine: Ser-1140, Ser-1162, Ser-1166, Ser-1176, Ser-1182, and Ser-1191. The span at 1156 to 1167 shows a compositional bias: low complexity; the sequence is SNASSSSNPSSP. The span at 1172–1184 shows a compositional bias: basic and acidic residues; that stretch reads GRLDSSEMDHSEN. 2 stretches are compositionally biased toward basic and acidic residues: residues 1196-1214 and 1225-1243; these read KKSDKRDDSDLVRSELEKP and QEEKLGMDDLTKLVQEQKP. Basic residues predominate over residues 1245–1254; sequence GSQRSRKRGH. The segment at residues 1249 to 1261 is a DNA-binding region (a.T hook 1); the sequence is SRKRGHTASESDE. Thr-1255 is modified (phosphothreonine). Residues Ser-1257 and Ser-1259 each carry the phosphoserine modification. Over residues 1265-1274 the composition is skewed to basic and acidic residues; sequence PEEKRLKEDI. The residue at position 1283 (Ser-1283) is a Phosphoserine. Residues 1287–1299 constitute a DNA-binding region (a.T hook 2); the sequence is KGKRGRPPKPLGG. A compositionally biased stretch (basic residues) spans 1310-1319; it reads TSKKGSKKKS. 2 positions are modified to phosphoserine: Ser-1319 and Ser-1334. Residues 1342 to 1353 are compositionally biased toward basic residues; sequence KSKQHRVSRRAQ. A compositionally biased stretch (polar residues) spans 1355–1372; it reads RAESPESSAIESTQSTPQ. A phosphoserine mark is found at Ser-1358 and Ser-1366. A Phosphothreonine modification is found at Thr-1367. Position 1369 is a phosphoserine (Ser-1369). 2 positions are modified to phosphothreonine: Thr-1370 and Thr-1381. Residues 1372–1384 constitute a DNA-binding region (a.T hook 3); that stretch reads QKGRGRPSKTPSP. Positions 1379-1388 are enriched in low complexity; sequence SKTPSPSQPK. Residues Ser-1383 and Ser-1417 each carry the phosphoserine modification. Over residues 1422 to 1432 the composition is skewed to acidic residues; the sequence is IPQEETEEEEV. The span at 1437-1447 shows a compositional bias: basic residues; the sequence is VRRRSAKRERR.

The protein belongs to the PDS5 family. In terms of assembly, interacts with the cohesin complex. Interacts with RAD21; the interaction is direct. Interacts with WAPL (via FGF motifs) or CDCA5 (via the FGF motif); the interaction is direct, cohesin-dependent and competitive. Widely expressed.

Its subcellular location is the nucleus. Functionally, regulator of sister chromatid cohesion in mitosis which may stabilize cohesin complex association with chromatin. May couple sister chromatid cohesion during mitosis to DNA replication. Cohesion ensures that chromosome partitioning is accurate in both meiotic and mitotic cells and plays an important role in DNA repair. Plays a role in androgen-induced proliferative arrest in prostate cells. The sequence is that of Sister chromatid cohesion protein PDS5 homolog B (PDS5B) from Homo sapiens (Human).